The primary structure comprises 156 residues: Ribosomal RNA large subunit methyltransferase H (156 aa).

Residues L73, G104, and 123–128 each bind S-adenosyl-L-methionine; that span reads LSRLTL.

This sequence belongs to the RNA methyltransferase RlmH family. As to quaternary structure, homodimer.

It localises to the cytoplasm. It catalyses the reaction pseudouridine(1915) in 23S rRNA + S-adenosyl-L-methionine = N(3)-methylpseudouridine(1915) in 23S rRNA + S-adenosyl-L-homocysteine + H(+). Its function is as follows. Specifically methylates the pseudouridine at position 1915 (m3Psi1915) in 23S rRNA. The sequence is that of Ribosomal RNA large subunit methyltransferase H from Thiobacillus denitrificans (strain ATCC 25259 / T1).